A 155-amino-acid polypeptide reads, in one-letter code: MKLQLVAVGTKMPAWVETGFTEYLRRFPKDMPFELVEIPAGKRGKNADIKRILEKEGEQMLAAAGKNRIVTLDIPGKPWDTPQLAAELERWKLDGRDVSLLIGGPEGLSPACKAAAEQSWSLSALTLPHPLVRVLVAESLYRAWSITTNHPYHRE.

Residues Leu72, Gly103, and 122 to 127 (LSALTL) contribute to the S-adenosyl-L-methionine site.

The protein belongs to the RNA methyltransferase RlmH family. Homodimer.

It localises to the cytoplasm. The catalysed reaction is pseudouridine(1915) in 23S rRNA + S-adenosyl-L-methionine = N(3)-methylpseudouridine(1915) in 23S rRNA + S-adenosyl-L-homocysteine + H(+). In terms of biological role, specifically methylates the pseudouridine at position 1915 (m3Psi1915) in 23S rRNA. This Escherichia fergusonii (strain ATCC 35469 / DSM 13698 / CCUG 18766 / IAM 14443 / JCM 21226 / LMG 7866 / NBRC 102419 / NCTC 12128 / CDC 0568-73) protein is Ribosomal RNA large subunit methyltransferase H.